Here is a 320-residue protein sequence, read N- to C-terminus: Ribosome production factor 2 homolog (320 aa).

A Brix domain is found at 30–234 (RTMLFLDGRK…IRRTKIASED (205 aa)). The tract at residues 268 to 320 (LGKQQTGSIQTRRVKALRKTPEEKKENRQRKKVALKAAAAEALASQGNNPFSS) is disordered. The segment covering 302-311 (LKAAAAEALA) has biased composition (low complexity).

The protein belongs to the RPF2 family.

The protein resides in the nucleus. The protein localises to the nucleolus. Required for normal assembly of the mitotic spindle. May be involved in both centrosome-dependent and centrosome-independent spindle assembly programs. This chain is Ribosome production factor 2 homolog, found in Drosophila melanogaster (Fruit fly).